Reading from the N-terminus, the 309-residue chain is Porphobilinogen deaminase (309 aa).

Cysteine 241 bears the S-(dipyrrolylmethanemethyl)cysteine mark.

This sequence belongs to the HMBS family. As to quaternary structure, monomer. Dipyrromethane is required as a cofactor.

It carries out the reaction 4 porphobilinogen + H2O = hydroxymethylbilane + 4 NH4(+). The protein operates within porphyrin-containing compound metabolism; protoporphyrin-IX biosynthesis; coproporphyrinogen-III from 5-aminolevulinate: step 2/4. Its function is as follows. Tetrapolymerization of the monopyrrole PBG into the hydroxymethylbilane pre-uroporphyrinogen in several discrete steps. The polypeptide is Porphobilinogen deaminase (Bacillus cereus (strain ZK / E33L)).